Consider the following 342-residue polypeptide: Cell division protein ZipA (342 aa).

The Periplasmic segment spans residues 1–6 (MEDLQL). The chain crosses the membrane as a helical span at residues 7–27 (VLFILGAIAIVAVLVHGFWSI). The Cytoplasmic portion of the chain corresponds to 28-342 (RRQQPKSLKD…DYLHRIRANA (315 aa)). The disordered stretch occupies residues 33–57 (KSLKDSPMGNFYKQQADKESPPKRV). Positions 47-57 (QADKESPPKRV) are enriched in basic and acidic residues.

It belongs to the ZipA family. In terms of assembly, interacts with FtsZ via their C-terminal domains.

The protein resides in the cell inner membrane. Its function is as follows. Essential cell division protein that stabilizes the FtsZ protofilaments by cross-linking them and that serves as a cytoplasmic membrane anchor for the Z ring. Also required for the recruitment to the septal ring of downstream cell division proteins. This Shewanella putrefaciens (strain CN-32 / ATCC BAA-453) protein is Cell division protein ZipA.